Reading from the N-terminus, the 344-residue chain is Geranylgeranyl transferase type-2 subunit alpha (344 aa).

PFTA repeat units lie at residues 44–78 (YSEGNLKLTTELLDWNPETYSVWNYRREILLNDVF), 89–123 (LLDNELKYVLSKMKVFPKVYWIFNHRRWCLENAPY), 125–159 (NWNYEMMITEKLLSADARNFHGWHYRRYVVSQIER), 165–199 (LAKKEMEYTTSAIATNFSNFSALHNRTKLIETILN), 214–248 (ILEQELDMIHQAVFTDPDDSSVWIYHRWLMGHCNP), and 266–293 (YLQKEIELIQELHEMEPENRWCCESLVN).

It belongs to the protein prenyltransferase subunit alpha family. Heterodimer of an alpha and a beta subunit.

The catalysed reaction is geranylgeranyl diphosphate + L-cysteinyl-[protein] = S-geranylgeranyl-L-cysteinyl-[protein] + diphosphate. In terms of biological role, catalyzes the transfer of a geranyl-geranyl moiety from geranyl-geranyl pyrophosphate to proteins having the C-terminal-XCC or -XCXC, where both cysteines may become modified. This chain is Geranylgeranyl transferase type-2 subunit alpha (bet4), found in Schizosaccharomyces pombe (strain 972 / ATCC 24843) (Fission yeast).